Reading from the N-terminus, the 275-residue chain is Melanoma-associated antigen B5 (275 aa).

The tract at residues 1 to 33 (MTSAGVFNAGSDERANSRDEEYPCSSEVSPSTE) is disordered. The segment covering 11 to 21 (SDERANSRDEE) has biased composition (basic and acidic residues). The segment covering 23-33 (PCSSEVSPSTE) has biased composition (low complexity). An MAGE domain is found at 40–239 (INIKVGLLEQ…GAFSSQYEEA (200 aa)).

Expressed in testis. Not expressed in other normal tissues, but is expressed in tumors of different histological origins.

This chain is Melanoma-associated antigen B5 (MAGEB5), found in Homo sapiens (Human).